The primary structure comprises 871 residues: Protein translocase subunit SecA (871 aa).

Residues Gln-80, 98–102 (GEGKT), and Asp-537 contribute to the ATP site.

This sequence belongs to the SecA family. As to quaternary structure, monomer and homodimer. Part of the essential Sec protein translocation apparatus which comprises SecA, SecYEG and auxiliary proteins SecDF. Other proteins may also be involved. A single SecA monomer interacts with SecY in the channel.

Its subcellular location is the cell inner membrane. It is found in the cytoplasm. The enzyme catalyses ATP + H2O + cellular proteinSide 1 = ADP + phosphate + cellular proteinSide 2.. Functionally, part of the Sec protein translocase complex. Interacts with the SecYEG preprotein conducting channel. Has a central role in coupling the hydrolysis of ATP to the transfer of proteins into and across the cell membrane, serving as an ATP-driven molecular motor driving the stepwise translocation of polypeptide chains across the membrane. The polypeptide is Protein translocase subunit SecA (Thermotoga maritima (strain ATCC 43589 / DSM 3109 / JCM 10099 / NBRC 100826 / MSB8)).